We begin with the raw amino-acid sequence, 398 residues long: Tryptophan synthase beta chain (398 aa).

K92 is modified (N6-(pyridoxal phosphate)lysine).

This sequence belongs to the TrpB family. In terms of assembly, tetramer of two alpha and two beta chains. Pyridoxal 5'-phosphate is required as a cofactor.

The enzyme catalyses (1S,2R)-1-C-(indol-3-yl)glycerol 3-phosphate + L-serine = D-glyceraldehyde 3-phosphate + L-tryptophan + H2O. It functions in the pathway amino-acid biosynthesis; L-tryptophan biosynthesis; L-tryptophan from chorismate: step 5/5. Functionally, the beta subunit is responsible for the synthesis of L-tryptophan from indole and L-serine. The protein is Tryptophan synthase beta chain of Nitrosospira multiformis (strain ATCC 25196 / NCIMB 11849 / C 71).